The chain runs to 274 residues: Ribosomal RNA small subunit methyltransferase A (274 aa).

S-adenosyl-L-methionine-binding residues include asparagine 28, leucine 30, glycine 55, glutamate 77, aspartate 103, and asparagine 122.

This sequence belongs to the class I-like SAM-binding methyltransferase superfamily. rRNA adenine N(6)-methyltransferase family. RsmA subfamily.

Its subcellular location is the cytoplasm. The catalysed reaction is adenosine(1518)/adenosine(1519) in 16S rRNA + 4 S-adenosyl-L-methionine = N(6)-dimethyladenosine(1518)/N(6)-dimethyladenosine(1519) in 16S rRNA + 4 S-adenosyl-L-homocysteine + 4 H(+). In terms of biological role, specifically dimethylates two adjacent adenosines (A1518 and A1519) in the loop of a conserved hairpin near the 3'-end of 16S rRNA in the 30S particle. May play a critical role in biogenesis of 30S subunits. In Rhizobium meliloti (strain 1021) (Ensifer meliloti), this protein is Ribosomal RNA small subunit methyltransferase A.